The primary structure comprises 83 residues: NAD(P)H-quinone oxidoreductase subunit L (83 aa).

The next 2 helical transmembrane spans lie at 15-35 (LMVLAAYVLLGGLYLIVVPLL) and 53-73 (LSAYGMVFLFFPGLILFAPFL).

Belongs to the complex I NdhL subunit family. NDH-1 can be composed of about 15 different subunits; different subcomplexes with different compositions have been identified which probably have different functions.

The protein resides in the cellular thylakoid membrane. The enzyme catalyses a plastoquinone + NADH + (n+1) H(+)(in) = a plastoquinol + NAD(+) + n H(+)(out). It catalyses the reaction a plastoquinone + NADPH + (n+1) H(+)(in) = a plastoquinol + NADP(+) + n H(+)(out). Its function is as follows. NDH-1 shuttles electrons from an unknown electron donor, via FMN and iron-sulfur (Fe-S) centers, to quinones in the respiratory and/or the photosynthetic chain. The immediate electron acceptor for the enzyme in this species is believed to be plastoquinone. Couples the redox reaction to proton translocation, and thus conserves the redox energy in a proton gradient. Cyanobacterial NDH-1 also plays a role in inorganic carbon-concentration. This chain is NAD(P)H-quinone oxidoreductase subunit L, found in Prochlorococcus marinus (strain MIT 9303).